We begin with the raw amino-acid sequence, 155 residues long: MRKAKPKKRYLLPDPKFSDTMVTKFVNSLMYDGKKSTAYSIFYDAVALVEKKTSESGLEVWKKALNNVSPQVEVRSRRVGGSTFQVPTEVRPDRKMALGMKWLINYARSRGEKTMTDKLAGEIISASKGEGAAVKKRDDVHRMAEANKAFSHFRF.

Belongs to the universal ribosomal protein uS7 family. As to quaternary structure, part of the 30S ribosomal subunit. Contacts proteins S9 and S11.

Functionally, one of the primary rRNA binding proteins, it binds directly to 16S rRNA where it nucleates assembly of the head domain of the 30S subunit. Is located at the subunit interface close to the decoding center, probably blocks exit of the E-site tRNA. The protein is Small ribosomal subunit protein uS7 of Cytophaga hutchinsonii (strain ATCC 33406 / DSM 1761 / CIP 103989 / NBRC 15051 / NCIMB 9469 / D465).